The primary structure comprises 267 residues: Tryptophan synthase alpha chain (267 aa).

Active-site proton acceptor residues include E39 and D50.

It belongs to the TrpA family. As to quaternary structure, tetramer of two alpha and two beta chains.

The enzyme catalyses (1S,2R)-1-C-(indol-3-yl)glycerol 3-phosphate + L-serine = D-glyceraldehyde 3-phosphate + L-tryptophan + H2O. The protein operates within amino-acid biosynthesis; L-tryptophan biosynthesis; L-tryptophan from chorismate: step 5/5. The alpha subunit is responsible for the aldol cleavage of indoleglycerol phosphate to indole and glyceraldehyde 3-phosphate. The chain is Tryptophan synthase alpha chain from Helicobacter hepaticus (strain ATCC 51449 / 3B1).